The chain runs to 518 residues: Glutamate--cysteine ligase (518 aa).

This sequence belongs to the glutamate--cysteine ligase type 1 family. Type 1 subfamily.

The catalysed reaction is L-cysteine + L-glutamate + ATP = gamma-L-glutamyl-L-cysteine + ADP + phosphate + H(+). It participates in sulfur metabolism; glutathione biosynthesis; glutathione from L-cysteine and L-glutamate: step 1/2. This is Glutamate--cysteine ligase from Escherichia coli O127:H6 (strain E2348/69 / EPEC).